The sequence spans 538 residues: Retinoblastoma-binding protein 5 (538 aa).

WD repeat units lie at residues 22–63 (DCIS…KIIS) and 64–103 (AHIHPVCSLCWSRDGHKLVSASTDNIVSQWDVLSGDCDQR). Lysine 129 is covalently cross-linked (Glycyl lysine isopeptide (Lys-Gly) (interchain with G-Cter in SUMO2)). WD repeat units lie at residues 148–188 (DDDS…LVAS), 196–235 (SNTTAIKSIEFARKGSCFLINTADRIIRVYDGREILTCGR), 249–291 (VNRT…KILH), and 293–331 (TRGELLLDVAWHPVRPIIASISSGVVSIWAQNQVENWSA). Threonine 252 carries the phosphothreonine; by CDK1 modification. The segment at 330–366 (SAFAPDFKELDENVEYEERESEFDIEDEDKSEPEQTG) is interaction with ASH2L. The span at 344–360 (EYEERESEFDIEDEDKS) shows a compositional bias: acidic residues. A disordered region spans residues 344–377 (EYEERESEFDIEDEDKSEPEQTGADAAEDEEVDV). Serine 350 bears the Phosphoserine mark. The interval 371-380 (EDEEVDVTSV) is interaction with WDR5. A phosphoserine mark is found at serine 388 and serine 389. The segment at 408–538 (VEDPEENPYG…TAGGAISELL (131 aa)) is disordered. A compositionally biased stretch (basic residues) spans 479–490 (SKKKQAGRPKGS). The span at 491 to 510 (KGKEKDSPFKPKLYKGDRGL) shows a compositional bias: basic and acidic residues. Serine 497 is subject to Phosphoserine; by CDK1. At serine 525 the chain carries Phosphoserine.

In terms of assembly, component of the SET1 complex, at least composed of the catalytic subunit (SETD1A or SETD1B), WDR5, WDR82, RBBP5, ASH2L/ASH2, CXXC1/CFP1, HCFC1 and DPY30. Core component of several methyltransferase-containing complexes including MLL1/MLL, MLL2/3 (also named ASCOM complex) and MLL4/WBP7. Each complex is at least composed of ASH2L, RBBP5, WDR5, DPY30, one or more specific histone methyltransferases (KMT2A/MLL1, KMT2D/MLL2, KMT2C/MLL3 and KMT2B/MLL4), and the facultative components PAGR1, BACC1, CHD8, E2F6, HCFC1, HCFC2, HSP70, INO80C, KDM6A, KANSL1, LAS1L, MAX, MCRS1, MEN1, MGA, MYST1/MOF, NCOA6, PAXIP1/PTIP, PELP1, PHF20, PRP31, RING2, RUVB1/TIP49A, RUVB2/TIP49B, SENP3, TAF1, TAF4, TAF6, TAF7, TAF9, TEX10 and alpha- and beta-tubulin. Component of a histone methylation complex composed of at least ZNF335, RBBP5, ASH2L and WDR5; the complex may have histone H3-specific methyltransferase activity, however does not have specificity for 'Lys-4' of histone H3. Interacts with ZNF335. Interacts with ASH2L; the interaction is direct. Interacts with WDR5; the interaction is direct. Components of the ZNF335-RBBP5-ASH2L-WDR5 histone methylation complex may associate with components of a nuclear receptor-mediated transcription complex to form a complex at least composed of ZNF335, HCFC1, CCAR2, EMSY, MKI67, RBBP5, ASH2L and WDR5. Within this complex interacts with EMSY. Found in a complex with RBBP5, ASH2L, DPY30, KMT2A, KMT2D and WDR5. Interacts with SETD1A. Interacts with WDR82. In terms of tissue distribution, ubiquitously expressed.

It is found in the nucleus. In embryonic stem (ES) cells, plays a crucial role in the differentiation potential, particularly along the neural lineage, regulating gene induction and H3 'Lys-4' methylation at key developmental loci, including that mediated by retinoic acid. Does not affect ES cell self-renewal. Component or associated component of some histone methyltransferase complexes which regulates transcription through recruitment of those complexes to gene promoters. As part of the MLL1/MLL complex, involved in mono-, di- and trimethylation at 'Lys-4' of histone H3. Histone H3 'Lys-4' methylation represents a specific tag for epigenetic transcriptional activation. In association with ASH2L and WDR5, stimulates the histone methyltransferase activities of KMT2A, KMT2B, KMT2C, KMT2D, SETD1A and SETD1B. In Homo sapiens (Human), this protein is Retinoblastoma-binding protein 5 (RBBP5).